The primary structure comprises 208 residues: MARYIGPKCKLSRREGTDLQLKSGVKPFDVKTKKANKAPGQHGQARGGKQSEYSLQLREKQKVRRIYGVLERQFSNYYKEAARVKGATGENLLKLLESRLDNVVYRMGFGSTRAEARQLVSHRSITLNGRRVNIASIQVKSGDVIAVHEGAKQQLRIKNAIELAAQRGIPAWIEVDHSKLEGTFKAAPDRSDLPAEINESLIVELYSK.

The tract at residues 24–52 (GVKPFDVKTKKANKAPGQHGQARGGKQSE) is disordered. The S4 RNA-binding domain occupies 98–160 (SRLDNVVYRM…AKQQLRIKNA (63 aa)).

The protein belongs to the universal ribosomal protein uS4 family. As to quaternary structure, part of the 30S ribosomal subunit. Contacts protein S5. The interaction surface between S4 and S5 is involved in control of translational fidelity.

In terms of biological role, one of the primary rRNA binding proteins, it binds directly to 16S rRNA where it nucleates assembly of the body of the 30S subunit. With S5 and S12 plays an important role in translational accuracy. The protein is Small ribosomal subunit protein uS4 of Acinetobacter baumannii (strain ACICU).